The sequence spans 519 residues: Bifunctional purine biosynthesis protein PurH (519 aa).

The MGS-like domain occupies 1–147; the sequence is MAKITRALIS…KNNHDVTVLV (147 aa).

Belongs to the PurH family.

The catalysed reaction is (6R)-10-formyltetrahydrofolate + 5-amino-1-(5-phospho-beta-D-ribosyl)imidazole-4-carboxamide = 5-formamido-1-(5-phospho-D-ribosyl)imidazole-4-carboxamide + (6S)-5,6,7,8-tetrahydrofolate. It carries out the reaction IMP + H2O = 5-formamido-1-(5-phospho-D-ribosyl)imidazole-4-carboxamide. The protein operates within purine metabolism; IMP biosynthesis via de novo pathway; 5-formamido-1-(5-phospho-D-ribosyl)imidazole-4-carboxamide from 5-amino-1-(5-phospho-D-ribosyl)imidazole-4-carboxamide (10-formyl THF route): step 1/1. It participates in purine metabolism; IMP biosynthesis via de novo pathway; IMP from 5-formamido-1-(5-phospho-D-ribosyl)imidazole-4-carboxamide: step 1/1. This is Bifunctional purine biosynthesis protein PurH from Trichlorobacter lovleyi (strain ATCC BAA-1151 / DSM 17278 / SZ) (Geobacter lovleyi).